The sequence spans 424 residues: Zinc metalloprotease RasP (424 aa).

Helical transmembrane passes span 5–25 (VAFI…HLIF), 174–194 (FAGP…LGII), 317–337 (LFML…VGIY), 351–371 (FLLW…VPLP), and 396–416 (EGIF…VVTW). Residue histidine 18 participates in Zn(2+) binding. Residue glutamate 19 is part of the active site. A Zn(2+)-binding site is contributed by histidine 22. The PDZ domain maps to 184–269 (AIAIFLILGI…SQDISVVPGE (86 aa)).

This sequence belongs to the peptidase M50B family. It depends on Zn(2+) as a cofactor.

The protein resides in the cell membrane. Functionally, is responsible for Site-2 cleavage of the RsiW anti-sigma factor. This results, after a third proteolytic step catalyzed by the ClpXP protease, in the release of SigW and the transcription activation of the genes under the control of the sigma-W factor. This is Zinc metalloprotease RasP (rasP) from Oceanobacillus iheyensis (strain DSM 14371 / CIP 107618 / JCM 11309 / KCTC 3954 / HTE831).